The following is a 275-amino-acid chain: Dermonecrotic toxin LhSicTox-alphaVI1ii (275 aa).

H5 is a catalytic residue. Mg(2+)-binding residues include E25 and D27. H41 functions as the Nucleophile in the catalytic mechanism. 2 disulfide bridges follow: C45–C51 and C47–C192. D85 contributes to the Mg(2+) binding site.

Belongs to the arthropod phospholipase D family. Class II subfamily. Mg(2+) serves as cofactor. In terms of tissue distribution, expressed by the venom gland.

Its subcellular location is the secreted. It carries out the reaction an N-(acyl)-sphingosylphosphocholine = an N-(acyl)-sphingosyl-1,3-cyclic phosphate + choline. It catalyses the reaction an N-(acyl)-sphingosylphosphoethanolamine = an N-(acyl)-sphingosyl-1,3-cyclic phosphate + ethanolamine. The enzyme catalyses a 1-acyl-sn-glycero-3-phosphocholine = a 1-acyl-sn-glycero-2,3-cyclic phosphate + choline. The catalysed reaction is a 1-acyl-sn-glycero-3-phosphoethanolamine = a 1-acyl-sn-glycero-2,3-cyclic phosphate + ethanolamine. Functionally, dermonecrotic toxins cleave the phosphodiester linkage between the phosphate and headgroup of certain phospholipids (sphingolipid and lysolipid substrates), forming an alcohol (often choline) and a cyclic phosphate. This toxin acts on sphingomyelin (SM). It may also act on ceramide phosphoethanolamine (CPE), lysophosphatidylcholine (LPC) and lysophosphatidylethanolamine (LPE), but not on lysophosphatidylserine (LPS), and lysophosphatidylglycerol (LPG). It acts by transphosphatidylation, releasing exclusively cyclic phosphate products as second products. Induces dermonecrosis, hemolysis, increased vascular permeability, edema, inflammatory response, and platelet aggregation. The sequence is that of Dermonecrotic toxin LhSicTox-alphaVI1ii from Loxosceles hirsuta (Recluse spider).